The following is a 753-amino-acid chain: MTILNHTLGFPRVGLRRELKKAQESYWAGNSTREELLAVGRELRARHWDQQKQAGIDLLPVGDFAWYDHVLTTSLLLGNVPARHQNKDGSVDIDTLFRIGRGRAPTGEPAAAAEMTKWFNTNYHYMVPEFVKGQQFKLTWTQLLEEVDEALALGHNVKPVLLGPVTWLWLGKVKGEQFDRLSLLNDILPVYQQVLAELEKRGIEWVQIDEPALVLELPQAWLDAYKPAYDALQGQVKLLLTTYFEGVTPNLDTITALPVQGLHVDLVHGKDGVAELHKRLPSDWLLSAGLINGRNVWRADLTEKYAQIKDIVGKRDLWVASSCSLLHSPIDLSVETRLDAEVKSWFAFALQKCHELALLRDALNSGDTAALAEWSAPIQARRHSTRVHNPAVEKRLAAITAQDSQRANVYEVRAEAQRARFKLPAWPTTTIGSFPQTTEIRTLRLDFKKGNLDANNYRTGIAEHIKQAIVEQERLGLDVLVHGEAERNDMVEYFGEHLDGFVFTQNGWVQSYGSRCVKPPIVIGDVSRPAPITVEWAKYAQSLTDKPVKGMLTGPVTILCWSFPREDVSRETIAKQIALALRDEVADLEAAGIGIIQIDEPALREGLPLRRSDWDAYLQWGVEAFRINAAVAKDDTQIHTHMCYCEFNDIMDSIAALDADVITIETSRSDMELLESFEEFDYPNEIGPGVYDIHSPNVPSVEWIEALLKKAAKRIPAERLWVNPDCGLKTRGWPETRAALANMVQAAQNLRRG.

Residues 17 to 20 and lysine 117 each bind 5-methyltetrahydropteroyltri-L-glutamate; that span reads RELK. Residues 431–433 and glutamate 484 each bind L-homocysteine; that span reads IGS. Residues 431–433 and glutamate 484 contribute to the L-methionine site; that span reads IGS. Residues 515 to 516 and tryptophan 561 each bind 5-methyltetrahydropteroyltri-L-glutamate; that span reads RC. Aspartate 599 serves as a coordination point for L-homocysteine. L-methionine is bound at residue aspartate 599. Glutamate 605 contributes to the 5-methyltetrahydropteroyltri-L-glutamate binding site. The Zn(2+) site is built by histidine 641, cysteine 643, and glutamate 665. Catalysis depends on histidine 694, which acts as the Proton donor. Residue cysteine 726 coordinates Zn(2+).

It belongs to the vitamin-B12 independent methionine synthase family. Zn(2+) serves as cofactor.

It catalyses the reaction 5-methyltetrahydropteroyltri-L-glutamate + L-homocysteine = tetrahydropteroyltri-L-glutamate + L-methionine. It participates in amino-acid biosynthesis; L-methionine biosynthesis via de novo pathway; L-methionine from L-homocysteine (MetE route): step 1/1. Its function is as follows. Catalyzes the transfer of a methyl group from 5-methyltetrahydrofolate to homocysteine resulting in methionine formation. The polypeptide is 5-methyltetrahydropteroyltriglutamate--homocysteine methyltransferase (Shigella boydii serotype 4 (strain Sb227)).